The sequence spans 371 residues: Bifunctional enzyme IspD/IspF (371 aa).

Residues 1–210 form a 2-C-methyl-D-erythritol 4-phosphate cytidylyltransferase region; sequence MSEISLIMLA…LDLPKPSFEI (210 aa). Residues 211–371 form a 2-C-methyl-D-erythritol 2,4-cyclodiphosphate synthase region; that stretch reads FTGNGFDVHE…NLKYFDWTRL (161 aa). Positions 217 and 219 each coordinate a divalent metal cation. Residues 217-219 and 243-244 each bind 4-CDP-2-C-methyl-D-erythritol 2-phosphate; these read DVH and HS. Histidine 251 provides a ligand contact to a divalent metal cation. 4-CDP-2-C-methyl-D-erythritol 2-phosphate contacts are provided by residues 265 to 267, 270 to 274, 341 to 344, phenylalanine 348, and arginine 351; these read DIG, YPDTD, and TTTE.

In the N-terminal section; belongs to the IspD/TarI cytidylyltransferase family. IspD subfamily. The protein in the C-terminal section; belongs to the IspF family. Requires a divalent metal cation as cofactor.

The catalysed reaction is 2-C-methyl-D-erythritol 4-phosphate + CTP + H(+) = 4-CDP-2-C-methyl-D-erythritol + diphosphate. It catalyses the reaction 4-CDP-2-C-methyl-D-erythritol 2-phosphate = 2-C-methyl-D-erythritol 2,4-cyclic diphosphate + CMP. The protein operates within isoprenoid biosynthesis; isopentenyl diphosphate biosynthesis via DXP pathway; isopentenyl diphosphate from 1-deoxy-D-xylulose 5-phosphate: step 2/6. It participates in isoprenoid biosynthesis; isopentenyl diphosphate biosynthesis via DXP pathway; isopentenyl diphosphate from 1-deoxy-D-xylulose 5-phosphate: step 4/6. Functionally, bifunctional enzyme that catalyzes the formation of 4-diphosphocytidyl-2-C-methyl-D-erythritol from CTP and 2-C-methyl-D-erythritol 4-phosphate (MEP) (IspD), and catalyzes the conversion of 4-diphosphocytidyl-2-C-methyl-D-erythritol 2-phosphate (CDP-ME2P) to 2-C-methyl-D-erythritol 2,4-cyclodiphosphate (ME-CPP) with a corresponding release of cytidine 5-monophosphate (CMP) (IspF). The sequence is that of Bifunctional enzyme IspD/IspF from Campylobacter jejuni subsp. doylei (strain ATCC BAA-1458 / RM4099 / 269.97).